An 85-amino-acid chain; its full sequence is Small ribosomal subunit protein bS16 (85 aa).

The protein belongs to the bacterial ribosomal protein bS16 family.

This is Small ribosomal subunit protein bS16 from Rubrobacter xylanophilus (strain DSM 9941 / JCM 11954 / NBRC 16129 / PRD-1).